A 450-amino-acid chain; its full sequence is Ig mu chain C region (450 aa).

The sequence is that of Ig mu chain C region from Canis lupus familiaris (Dog).